We begin with the raw amino-acid sequence, 167 residues long: Methyl-coenzyme M reductase II operon protein D (167 aa).

In terms of assembly, MCR is composed of three subunits: alpha, beta, and gamma. The function of protein D is not known.

This Methanocaldococcus jannaschii (strain ATCC 43067 / DSM 2661 / JAL-1 / JCM 10045 / NBRC 100440) (Methanococcus jannaschii) protein is Methyl-coenzyme M reductase II operon protein D (mrtD).